Consider the following 524-residue polypeptide: FAD-dependent monooxygenase opdD (524 aa).

Glu-48 and Arg-145 together coordinate FAD.

This sequence belongs to the paxM FAD-dependent monooxygenase family.

Its pathway is secondary metabolite biosynthesis. Its function is as follows. FAD-dependent monooxygenase; part of the gene cluster that mediates the biosynthesis of oxopyrrolidines, polyketide-amino acid hybrid compounds with feature structures of tetramic acid. Does not seem to play a role in oxopyrrolidines A and B biosynthesis. May be involved in further modifications of these oxopyrrolidines. The chain is FAD-dependent monooxygenase opdD from Penicillium oxalicum (strain 114-2 / CGMCC 5302) (Penicillium decumbens).